The sequence spans 439 residues: Acyl transferase 4 (439 aa).

Active-site proton acceptor residues include His166 and Asp382.

The protein belongs to the plant acyltransferase family.

Grass-specific monolignol p-coumaroyl transferase involved in the biosynthesis of acylated monolignols or monolignol conjugates that serve as monomer precursors of lignin. Can synthesize sinapyl p-coumarate, p-coumaryl p-coumarate, sinapyl caffeate and p-coumaryl caffeate in vitro. The sequence is that of Acyl transferase 4 from Oryza sativa subsp. japonica (Rice).